The sequence spans 263 residues: Troponin T, fast skeletal muscle isoforms (263 aa).

A compositionally biased stretch (acidic residues) spans 1 to 26 (MSDTEEVEHGEEEYEEEAHEAEEVHE). Disordered stretches follow at residues 1–66 (MSDT…FDDI), 107–188 (RAER…VLAE), and 243–263 (DQAQ…GRWK). The residue at position 2 (serine 2) is an N-acetylserine. Composition is skewed to basic and acidic residues over residues 56–66 (PEGEKVDFDDI), 107–149 (RAER…DDLK), and 177–188 (TARETKKKVLAE). A compositionally biased stretch (basic residues) spans 247-263 (KHSKKAGAKGKVGGRWK).

Belongs to the troponin T family.

Functionally, troponin T is the tropomyosin-binding subunit of troponin, the thin filament regulatory complex which confers calcium-sensitivity to striated muscle actomyosin ATPase activity. The polypeptide is Troponin T, fast skeletal muscle isoforms (TNNT3) (Gallus gallus (Chicken)).